The primary structure comprises 373 residues: Peroxisomal biogenesis factor 3 (373 aa).

The Cytoplasmic segment spans residues 1 to 15 (MLRSMWNFLKRHKKK). The segment at 1 to 45 (MLRSMWNFLKRHKKKCIFLGTVLGGVYILGKYGQKKIREIQEREA) is targeting to peroxisomes. A helical membrane pass occupies residues 16 to 36 (CIFLGTVLGGVYILGKYGQKK). Topologically, residues 37 to 116 (IREIQEREAA…LKIISFTRSI (80 aa)) are peroxisomal. Residues 117–140 (VAVYSTCMLVVLLRVQLNIIGGYI) traverse the membrane as a helical segment. The interval 120 to 136 (YSTCMLVVLLRVQLNII) is interaction with PEX19. Over 141–373 (YLDNATVGKN…AFSTPQQLEK (233 aa)) the chain is Cytoplasmic.

It belongs to the peroxin-3 family. In terms of assembly, interacts with PEX19.

The protein resides in the peroxisome membrane. Involved in peroxisome biosynthesis and integrity. Assembles membrane vesicles before the matrix proteins are translocated. As a docking factor for PEX19, is necessary for the import of peroxisomal membrane proteins in the peroxisomes. This Cricetulus longicaudatus (Long-tailed dwarf hamster) protein is Peroxisomal biogenesis factor 3 (PEX3).